Reading from the N-terminus, the 557-residue chain is Potassium-transporting ATPase potassium-binding subunit (557 aa).

12 helical membrane-spanning segments follow: residues 5–25 (GFLL…PLGS), 63–83 (LSAI…MLLG), 132–152 (GLTV…FALI), 170–190 (LLRI…LFFI), 253–273 (FVQM…FGEV), 283–303 (LLWA…WAEV), 329–349 (VLVS…AVIA), 356–376 (ALGG…FGGV), 379–399 (GLYG…LMIG), 416–436 (LTAL…ALAM), 484–504 (LLAL…MAIA), and 526–546 (LFVG…FIPA).

It belongs to the KdpA family. The system is composed of three essential subunits: KdpA, KdpB and KdpC.

Its subcellular location is the cell inner membrane. Functionally, part of the high-affinity ATP-driven potassium transport (or Kdp) system, which catalyzes the hydrolysis of ATP coupled with the electrogenic transport of potassium into the cytoplasm. This subunit binds the periplasmic potassium ions and delivers the ions to the membrane domain of KdpB through an intramembrane tunnel. In Escherichia coli O127:H6 (strain E2348/69 / EPEC), this protein is Potassium-transporting ATPase potassium-binding subunit.